The following is a 1028-amino-acid chain: MESALTARDRVGVQDFVLLENFTSEAAFIENLRKRFKENLIYTYIGSVLVSVNPYKELEIYSKQNMERYRGVSFYEVSPHLYAIADNSYRSLRTERKDQCILISGESGAGKTEATKKILQYYAVTCPASQQVETVKDRLLQSNPVLEAFGNTKTLRNDNSSRFGKYMDVQFDYRGAPVGGHILNYLLEKSRVVHQNHGERNFHIFYQLLEGGEEDLLRRLGLEKNPQQYHYLVKGHCARVSSINDKNDWKVVRRALSIISFNDNEVEDLLSIVASVLHLGNVQFAADEQGNAQVTTENQIKYLARLLAVEGSVLRDALIHKKIIAKGEELISPLNLEQAAYARDALAKAIYGRTFSWLVNKVNKSLAYKEGEFPGWRSTTVLGLLDIYGFEVFQHNSFEQFCINYCNEKLQQLFIELTLKSEQEEYESEGIAWEPVQYFNNKIICDLVEEKFKGIISILDEECLRPGDATDTTFLEKLEETVKNHPHFLTHKLADQKTRKSLGREEFRLLHYAGEVTYSVAGFLDKNNDLLFRNLKETMCNSENPIINQCFDRTELTDKKRPETAATQFKNSLSKLMEILMSKEPSYIRCIKPNDAKQADRFDEVLIRHQVKYLGLMENLRVRRAGFAYRRKYEVFLQRYKSLCPETWPTWDGRPHDGVAVLVKHLGYKQEEYKMGRTKIFIRFPKTLFATEDALEVRKQSLATKMQATWRGFYRRKKFLHMKHSAIAIQSWWRGTLGRRKAAKRKWAVQTIRRFIKGFIYRNHPRCPENEYFLDYIRFSFLMNLKRNLPKNVLDKSWPTPPPSLCEASQLLRQLCMQNMVWTYCKRISPEWKQQLEQKVIASEIFKGKKDNYPQSVPRLFINTRLGNEEINAKVLQALENEAIKYAVPVIKYDRKGYKARSRQLLLTQNAVIIVEDSKIKQRIDYANLTGISVSSLSDNLFVLHVHCEDNKQKGDVVLQSDHVIETLTKTAMRADKVNNININQGSIKFTVGQGKEGIIDFISGSELLIAKAKNGHLTVVAPRLNSR.

M1 carries the N-acetylmethionine modification. A Myosin motor domain is found at 12 to 696 (GVQDFVLLEN…TLFATEDALE (685 aa)). ATP contacts are provided by residues N53, Y61, 104-113 (SGESGAGKTE), and 157-161 (NDNSS). Residue K348 is modified to N6-methyllysine. Residues 573–595 (LSKLMEILMSKEPSYIRCIKPND) form an actin-binding region. 2 consecutive IQ domains span residues 699 to 728 (KQSLATKMQATWRGFYRRKKFLHMKHSAIA) and 722 to 751 (MKHSAIAIQSWWRGTLGRRKAAKRKWAVQT). The TH1 domain occupies 850 to 1024 (KDNYPQSVPR…NGHLTVVAPR (175 aa)).

It belongs to the TRAFAC class myosin-kinesin ATPase superfamily. Myosin family. Interacts (via its IQ motifs) with CALM.

Its subcellular location is the cytoplasm. It localises to the cell cortex. The protein resides in the cell projection. It is found in the ruffle membrane. The protein localises to the cytoplasmic vesicle. Its subcellular location is the stereocilium membrane. Myosins are actin-based motor molecules with ATPase activity. Unconventional myosins serve in intracellular movements. Their highly divergent tails are presumed to bind to membranous compartments, which would be moved relative to actin filaments. The polypeptide is Unconventional myosin-Ic (MYO1C) (Gallus gallus (Chicken)).